The primary structure comprises 199 residues: OPA3-like protein (199 aa).

Positions 98 to 141 form a coiled coil; it reads RSSEKDKKKEEALQNRFKNLEEKLEVQQETINNLTNVIEAIQSS.

This sequence belongs to the OPA3 family.

This is OPA3-like protein from Dictyostelium discoideum (Social amoeba).